The chain runs to 576 residues: G protein-coupled receptor kinase 6 (576 aa).

The interval M1–T185 is N-terminal. The region spanning Y53 to L171 is the RGS domain. One can recognise a Protein kinase domain in the interval F186–F448. ATP is bound by residues L192 to V200, K215, and T264 to D270. D311 (proton acceptor) is an active-site residue. E315–L318 is a binding site for ATP. Positions K449–E514 constitute an AGC-kinase C-terminal domain. The residue at position 484 (S484) is a Phosphoserine; by autocatalysis. T485 carries the post-translational modification Phosphothreonine; by autocatalysis. S-palmitoyl cysteine attachment occurs at residues C561, C562, and C565. 2 positions are modified to phosphoserine: S566 and S568.

Belongs to the protein kinase superfamily. AGC Ser/Thr protein kinase family. GPRK subfamily. Interacts with GIT1. As to expression, widely expressed. Detectable in all brain areas examined.

It localises to the membrane. It catalyses the reaction [G-protein-coupled receptor] + ATP = [G-protein-coupled receptor]-phosphate + ADP + H(+). Its function is as follows. Specifically phosphorylates the activated forms of G protein-coupled receptors. Such receptor phosphorylation initiates beta-arrestin-mediated receptor desensitization, internalization, and signaling events leading to their desensitization. Seems to be involved in the desensitization of D2-like dopamine receptors in striatum and chemokine receptor CXCR4 which is critical for CXCL12-induced cell chemotaxis. Phosphorylates rhodopsin (RHO) (in vitro) and a non G-protein-coupled receptor: LRP6 during Wnt signaling (in vitro). In Rattus norvegicus (Rat), this protein is G protein-coupled receptor kinase 6 (Grk6).